A 448-amino-acid polypeptide reads, in one-letter code: MGKYFGTDGVRGVANSELTPELAFKVGRFGGYVLTKDKERPKVLIGRDTRISGHMLEGALVAGLLSIGAEVMRLGVISTPGVAYLTKAMDAEAGVMISASHNPVQDNGIKFFGGDGFKLSDEQELEIERLMDQPEDHLPRPVGADLGMVNDYFEGGQKYLQFLKQSADEDFTGIHVALDCAHGATSSLATHLFADLDADVSTMGTSPNGLNINDGVGSTHPEALAEFVKEKGADVGMAFDGDGDRLIAVDEKGNIVDGDQIMYICAKYLKSEGRLTDNTVVSTVMSNLGFYKALEAEGIKSVQTAVGDRYVVEAMKKGGFTLGGEQSGHLIFLDYNTTGDGLLSAIMLMNTIKMTGKPLSELAAEMQKFPQLLLNVKVTDKHKVTENEKVKAVIEEVEKEMNGDGRILVRPSGTEPLVRVMAEAKTKELCEKYVGRIADVVKAEMGAE.

The Phosphoserine intermediate role is filled by serine 100. Residues serine 100, aspartate 240, aspartate 242, and aspartate 244 each contribute to the Mg(2+) site. A Phosphoserine modification is found at serine 100.

It belongs to the phosphohexose mutase family. Mg(2+) is required as a cofactor. Activated by phosphorylation.

It carries out the reaction alpha-D-glucosamine 1-phosphate = D-glucosamine 6-phosphate. Functionally, catalyzes the conversion of glucosamine-6-phosphate to glucosamine-1-phosphate. This is Phosphoglucosamine mutase from Bacillus licheniformis (strain ATCC 14580 / DSM 13 / JCM 2505 / CCUG 7422 / NBRC 12200 / NCIMB 9375 / NCTC 10341 / NRRL NRS-1264 / Gibson 46).